Reading from the N-terminus, the 385-residue chain is Outer membrane porin protein BP0840 (385 aa).

The signal sequence occupies residues 1 to 20; it reads MKKTLLAAALLAGFAGAAQA.

To bacterial outer membrane proteins and porins. Homotrimer.

It localises to the cell outer membrane. Functionally, forms anion selective channels. In Bordetella pertussis (strain Tohama I / ATCC BAA-589 / NCTC 13251), this protein is Outer membrane porin protein BP0840.